A 165-amino-acid chain; its full sequence is 6,7-dimethyl-8-ribityllumazine synthase (165 aa).

5-amino-6-(D-ribitylamino)uracil is bound by residues Trp26, 57 to 59, and 79 to 81; these read SVE and VVV. (2S)-2-hydroxy-3-oxobutyl phosphate is bound at residue 84–85; it reads AT. Residue His87 is the Proton donor of the active site. His112 is a binding site for 5-amino-6-(D-ribitylamino)uracil. A (2S)-2-hydroxy-3-oxobutyl phosphate-binding site is contributed by Arg126.

It belongs to the DMRL synthase family.

It catalyses the reaction (2S)-2-hydroxy-3-oxobutyl phosphate + 5-amino-6-(D-ribitylamino)uracil = 6,7-dimethyl-8-(1-D-ribityl)lumazine + phosphate + 2 H2O + H(+). Its pathway is cofactor biosynthesis; riboflavin biosynthesis; riboflavin from 2-hydroxy-3-oxobutyl phosphate and 5-amino-6-(D-ribitylamino)uracil: step 1/2. Catalyzes the formation of 6,7-dimethyl-8-ribityllumazine by condensation of 5-amino-6-(D-ribitylamino)uracil with 3,4-dihydroxy-2-butanone 4-phosphate. This is the penultimate step in the biosynthesis of riboflavin. This chain is 6,7-dimethyl-8-ribityllumazine synthase, found in Salinispora arenicola (strain CNS-205).